The chain runs to 662 residues: DNA ligase (662 aa).

Residues 32–36 (DAEYD), 75–76 (SL), and glutamate 106 each bind NAD(+). Lysine 108 acts as the N6-AMP-lysine intermediate in catalysis. Arginine 129, glutamate 164, lysine 271, and lysine 295 together coordinate NAD(+). Cysteine 389, cysteine 392, cysteine 407, and cysteine 413 together coordinate Zn(2+). Residues 580–662 (SSNSVLNNKI…HKVISLGVFK (83 aa)) enclose the BRCT domain.

This sequence belongs to the NAD-dependent DNA ligase family. LigA subfamily. Requires Mg(2+) as cofactor. It depends on Mn(2+) as a cofactor.

The catalysed reaction is NAD(+) + (deoxyribonucleotide)n-3'-hydroxyl + 5'-phospho-(deoxyribonucleotide)m = (deoxyribonucleotide)n+m + AMP + beta-nicotinamide D-nucleotide.. In terms of biological role, DNA ligase that catalyzes the formation of phosphodiester linkages between 5'-phosphoryl and 3'-hydroxyl groups in double-stranded DNA using NAD as a coenzyme and as the energy source for the reaction. It is essential for DNA replication and repair of damaged DNA. The protein is DNA ligase of Wolbachia pipientis wMel.